Consider the following 944-residue polypeptide: Tyrosine-protein kinase transmembrane receptor ROR2 (944 aa).

Residues 1–33 (MARGWVRPSRVPLCARAVWTAAALLLWTPWTAG) form the signal peptide. The Extracellular segment spans residues 34–403 (EVEDSEAIDT…CSPRDGSKMG (370 aa)). The 91-residue stretch at 55–145 (PTLKGYFLNF…VATNGLKTIT (91 aa)) folds into the Ig-like C2-type domain. A glycan (N-linked (GlcNAc...) asparagine) is linked at Asn70. 9 cysteine pairs are disulfide-bonded: Cys83–Cys135, Cys174–Cys239, Cys182–Cys232, Cys223–Cys264, Cys252–Cys300, Cys256–Cys286, Cys316–Cys394, Cys337–Cys377, and Cys365–Cys389. One can recognise an FZ domain in the interval 169–303 (QEDGFCQPYR…SPDAANCMRI (135 aa)). N-linked (GlcNAc...) asparagine glycosylation occurs at Asn188. Residues 316 to 394 (CYNGSGADYR…RVELCDVPPC (79 aa)) form the Kringle domain. Residue Asn318 is glycosylated (N-linked (GlcNAc...) asparagine). The helical transmembrane segment at 404 to 424 (ILYILVPSIAIPLVIACLFFL) threads the bilayer. At 425-944 (VCMCRNKQKA…TEAAHVQLEA (520 aa)) the chain is on the cytoplasmic side. Positions 473–746 (VRFMEELGED…PRFKDIHSRL (274 aa)) constitute a Protein kinase domain. ATP is bound by residues 479-487 (LGEDRFGKV) and Lys507. Catalysis depends on Asp615, which acts as the Proton acceptor. The residue at position 646 (Tyr646) is a Phosphotyrosine; by autocatalysis. The segment at 757-779 (SSAQTSGASNTTQTSSLSTSPVS) is disordered. A compositionally biased stretch (low complexity) spans 765-779 (SNTTQTSSLSTSPVS). Arg785 bears the Asymmetric dimethylarginine mark. 2 disordered regions span residues 850–879 (QVPPQMVPKPSSHHSGSGSTSTGYVTTAPS) and 898–929 (QNIAEDVAQSPVQEAEEEEEGSVPETELLGDN). Over residues 857–872 (PKPSSHHSGSGSTSTG) the composition is skewed to low complexity.

The protein belongs to the protein kinase superfamily. Tyr protein kinase family. ROR subfamily. Homodimer; promotes osteogenesis. Binds YWHAB. Interacts with WTIP. Interacts with ROR2. It depends on Mg(2+) as a cofactor.

The protein resides in the cell membrane. The catalysed reaction is L-tyrosyl-[protein] + ATP = O-phospho-L-tyrosyl-[protein] + ADP + H(+). In terms of biological role, tyrosine-protein kinase receptor which may be involved in the early formation of the chondrocytes. It seems to be required for cartilage and growth plate development. Phosphorylates YWHAB, leading to induction of osteogenesis and bone formation. In contrast, has also been shown to have very little tyrosine kinase activity in vitro. May act as a receptor for wnt ligand WNT5A which may result in the inhibition of WNT3A-mediated signaling. The chain is Tyrosine-protein kinase transmembrane receptor ROR2 (Ror2) from Mus musculus (Mouse).